A 436-amino-acid chain; its full sequence is MGDKNDDDKNIEIWKIKKLIKSLEAARGNGTSMISLIMPPRDQVSRVTKMLGDEYGTASNIKSRVNRQSVLGAITSAQQRLKLYNRVPPNGLVLYTGTIVNEDGKEKKVTIDFEPFRPINASLYLCDNKFHTEALNELLESDDKFGFIVMDGNGTLFGTLSGNTREVLHKFSVDLPKKHGRGGQSALRFARLRMEKRHNYVRKTAELATQYYINPATSQPNVSGLILAGSADFKTELSQSDMFDPRLAAKILNVVDVSYGGENGFNQAIELSAEILANVKFIQEKRLIGKYFEEISQDTGKYVFGVEDTLNALESGAIETLIVWENLDINRYVMKNSATGETVIKHLNKEQEANTENFKVADSDLALDVEEKLSLLEWLANEYRRFGCALEFVTNKSQEGSQFCRGFGGIGGILRYQLDMTAFDSEDGEALDDDSE.

The protein belongs to the eukaryotic release factor 1 family. As to quaternary structure, heterodimer of two subunits, one of which binds GTP.

It is found in the cytoplasm. Its function is as follows. Directs the termination of nascent peptide synthesis (translation) in response to the termination codons UAA, UAG and UGA. Modulates plant growth and development. This is Eukaryotic peptide chain release factor subunit 1-1 (ERF1-1) from Arabidopsis thaliana (Mouse-ear cress).